The sequence spans 1700 residues: Leucine-rich repeat-containing protein 37A2 (1700 aa).

A signal peptide spans 1-35 (MSSAQCPALVCVMSRLRFWGPWPLLMWQLLWLLVK). At 36-1582 (EAQPLEWVKD…VPGYGYTDKL (1547 aa)) the chain is on the extracellular side. Over residues 54 to 65 (LGPPDSWSSHSS) the composition is skewed to polar residues. 6 disordered regions span residues 54–104 (LGPP…ESTE), 130–156 (QQDLKDKLSPQERLPVSPKKLKKDPAQ), 169–534 (QLST…AQPP), 559–580 (TEVELSPTMKETPTQPPKKVVP), 619–642 (PEPTTEVGHSTPPKRTIVSPKHPE), and 729–752 (TKPTTEVKPSPTTEETSTQPPDLG). An LRR 1 repeat occupies 137–160 (LSPQERLPVSPKKLKKDPAQRWSL). Composition is skewed to polar residues over residues 169-189 (QLSTPQSQKQTLQNEYSSTDT) and 223-237 (ETQNPETLEDIQSSS). LRR repeat units lie at residues 230–253 (LEDIQSSSLQQEAPAQLPQLLEEE) and 267–290 (ESSMESLTLPNHEVSVQPPGEDQA). Over residues 238–249 (LQQEAPAQLPQL) the composition is skewed to low complexity. The N-linked (GlcNAc...) asparagine glycan is linked to Asn296. Polar residues predominate over residues 307–326 (TITSEPTNETESSQAQQETP). The span at 358-368 (SEQQQPVQPSE) shows a compositional bias: low complexity. Residues 433-446 (LVHQEATTRLSGSG) show a composition bias toward polar residues. Residues 482-493 (SPEPINNENPSP) are compositionally biased toward low complexity. Positions 729–749 (TKPTTEVKPSPTTEETSTQPP) are enriched in low complexity. LRR repeat units follow at residues 864–887 (NGTFTILNFQGNYISYIDGNVWKA), 888–911 (YSWTEKLILRENNLTELHKDSFEG), 912–935 (LLSLQYLDLSCNKIQSIERHTFEP), 937–959 (PFLKFINLSCNVITELSFGTFQA), 963–987 (MQFLHKLILNHNPLTTVEDPYLFKL), and 1002–1027 (LTTLKNILMMTVELEKLILPSHMACC). N-linked (GlcNAc...) asparagine glycosylation occurs at Asn1079. The LRR 10 repeat unit spans residues 1124 to 1146 (LPYFSAVNLDVKSLLLPFIKLPT). Basic and acidic residues-rich tracts occupy residues 1182–1191 (VGRQSIRREQ) and 1201–1216 (AEEKRLGSPAPREVEQ). Disordered stretches follow at residues 1182 to 1227 (VGRQ…EKLA) and 1309 to 1328 (KTRSHVTHRTPKVKKSPKVR). The helical transmembrane segment at 1583–1603 (ILALIVTGILTILIILFCLIV) threads the bilayer. Residues 1604 to 1700 (ICCHRRSLQE…TEEEESEALP (97 aa)) are Cytoplasmic-facing. Residues 1675-1685 (NEDKILNRDPG) are compositionally biased toward basic and acidic residues. Residues 1675 to 1700 (NEDKILNRDPGDSEAPTEEEESEALP) form a disordered region. Residues 1689–1700 (APTEEEESEALP) show a composition bias toward acidic residues.

Belongs to the LRRC37A family.

It localises to the membrane. The sequence is that of Leucine-rich repeat-containing protein 37A2 (LRRC37A2) from Homo sapiens (Human).